Here is a 75-residue protein sequence, read N- to C-terminus: Acylphosphatase-like protein MJ1405 (75 aa).

One can recognise an Acylphosphatase-like domain in the interval 8–75; that stretch reads TYEIIIYGRI…TNFWRVRKCK (68 aa).

The polypeptide is Acylphosphatase-like protein MJ1405 (Methanocaldococcus jannaschii (strain ATCC 43067 / DSM 2661 / JAL-1 / JCM 10045 / NBRC 100440) (Methanococcus jannaschii)).